A 122-amino-acid polypeptide reads, in one-letter code: Large ribosomal subunit protein uL14c (122 aa).

This sequence belongs to the universal ribosomal protein uL14 family. Part of the 50S ribosomal subunit.

It is found in the plastid. Its subcellular location is the chloroplast. In terms of biological role, binds to 23S rRNA. The polypeptide is Large ribosomal subunit protein uL14c (Oltmannsiellopsis viridis (Marine flagellate)).